Here is a 72-residue protein sequence, read N- to C-terminus: Translational regulator CsrA (72 aa).

Belongs to the CsrA/RsmA family. In terms of assembly, homodimer; the beta-strands of each monomer intercalate to form a hydrophobic core, while the alpha-helices form wings that extend away from the core.

Its subcellular location is the cytoplasm. Its function is as follows. A translational regulator that binds mRNA to regulate translation initiation and/or mRNA stability. Usually binds in the 5'-UTR at or near the Shine-Dalgarno sequence preventing ribosome-binding, thus repressing translation. Its main target seems to be the major flagellin gene, while its function is anatagonized by FliW. This chain is Translational regulator CsrA, found in Clostridium botulinum (strain Loch Maree / Type A3).